The sequence spans 114 residues: Nucleoid-associated protein slr1847 (114 aa).

This sequence belongs to the YbaB/EbfC family. In terms of assembly, homodimer.

It localises to the cytoplasm. It is found in the nucleoid. Functionally, binds to DNA and alters its conformation. May be involved in regulation of gene expression, nucleoid organization and DNA protection. This is Nucleoid-associated protein slr1847 from Synechocystis sp. (strain ATCC 27184 / PCC 6803 / Kazusa).